The following is a 420-amino-acid chain: Serine hydroxymethyltransferase (420 aa).

(6S)-5,6,7,8-tetrahydrofolate-binding positions include leucine 121 and 125–127 (GHL). At lysine 229 the chain carries N6-(pyridoxal phosphate)lysine.

It belongs to the SHMT family. Homodimer. Requires pyridoxal 5'-phosphate as cofactor.

It localises to the cytoplasm. The enzyme catalyses (6R)-5,10-methylene-5,6,7,8-tetrahydrofolate + glycine + H2O = (6S)-5,6,7,8-tetrahydrofolate + L-serine. Its pathway is one-carbon metabolism; tetrahydrofolate interconversion. It participates in amino-acid biosynthesis; glycine biosynthesis; glycine from L-serine: step 1/1. Functionally, catalyzes the reversible interconversion of serine and glycine with tetrahydrofolate (THF) serving as the one-carbon carrier. This reaction serves as the major source of one-carbon groups required for the biosynthesis of purines, thymidylate, methionine, and other important biomolecules. Also exhibits THF-independent aldolase activity toward beta-hydroxyamino acids, producing glycine and aldehydes, via a retro-aldol mechanism. This Streptomyces coelicolor (strain ATCC BAA-471 / A3(2) / M145) protein is Serine hydroxymethyltransferase.